We begin with the raw amino-acid sequence, 115 residues long: MKFVLLFGVLLVTLFSYSSAEMLDDFDQADEDELLSLIEKEEARAKECTPRFCDCSHDRHSCCRSELFKDVCTCFYPEGGDNEVCTCQQPKHLKYMEKAADKAKKFGGKIKKWFG.

A signal peptide spans 1-20; sequence MKFVLLFGVLLVTLFSYSSA. The propeptide occupies 21–44; that stretch reads EMLDDFDQADEDELLSLIEKEEAR. 4 disulfides stabilise this stretch: cysteine 48/cysteine 63, cysteine 55/cysteine 72, cysteine 62/cysteine 87, and cysteine 74/cysteine 85.

It belongs to the neurotoxin 19 (CSTX) family. 01 subfamily. In terms of tissue distribution, expressed by the venom gland.

It is found in the secreted. This is U3-lycotoxin-Ls1c from Lycosa singoriensis (Wolf spider).